The following is a 255-amino-acid chain: BPI fold-containing family A member 1 (255 aa).

An N-terminal signal peptide occupies residues 1–19 (MFHIGSLVVLCGLLAPTTA). The important for surfactant activity and antibacterial properties stretch occupies residues 87–92 (LLGSLL). Residues Asn157, Asn178, and Asn205 are each glycosylated (N-linked (GlcNAc...) asparagine). Cys179 and Cys223 are disulfide-bonded.

Belongs to the BPI/LBP/Plunc superfamily. Plunc family. As to quaternary structure, monomer. Interacts (via N-terminus) with SCNN1B, a subunit of the heterotrimeric epithelial sodium channel (ENaC); this inhibits proteolytic activation of ENaC. In terms of tissue distribution, expressed in trachea, and at lower levels in nasal epithelium.

The protein localises to the secreted. Lipid-binding protein which shows high specificity for the surfactant phospholipid dipalmitoylphosphatidylcholine (DPPC). Plays a role in the innate immune responses of the upper airways. Reduces the surface tension in secretions from airway epithelia and inhibits the formation of biofilm by pathogenic Gram-negative bacteria, such as P.aeruginosa and K.pneumoniae. Negatively regulates proteolytic cleavage of SCNN1G, an event that is required for activation of the epithelial sodium channel (ENaC), and thereby contributes to airway surface liquid homeostasis and proper clearance of mucus. Plays a role in the airway inflammatory response after exposure to irritants. May attract macrophages and neutrophils. In Bos taurus (Bovine), this protein is BPI fold-containing family A member 1 (BPIFA1).